Consider the following 465-residue polypeptide: L-seryl-tRNA(Sec) selenium transferase (465 aa).

At Lys-294 the chain carries N6-(pyridoxal phosphate)lysine.

This sequence belongs to the SelA family. It depends on pyridoxal 5'-phosphate as a cofactor.

It localises to the cytoplasm. The enzyme catalyses L-seryl-tRNA(Sec) + selenophosphate + H(+) = L-selenocysteinyl-tRNA(Sec) + phosphate. It functions in the pathway aminoacyl-tRNA biosynthesis; selenocysteinyl-tRNA(Sec) biosynthesis; selenocysteinyl-tRNA(Sec) from L-seryl-tRNA(Sec) (bacterial route): step 1/1. Its function is as follows. Converts seryl-tRNA(Sec) to selenocysteinyl-tRNA(Sec) required for selenoprotein biosynthesis. The polypeptide is L-seryl-tRNA(Sec) selenium transferase (selA) (Desulfomicrobium baculatum (Desulfovibrio baculatus)).